The following is a 192-amino-acid chain: Xanthine phosphoribosyltransferase (192 aa).

Residues Leu-20 and Asn-27 each coordinate xanthine. 128-132 is a 5-phospho-alpha-D-ribose 1-diphosphate binding site; that stretch reads ANGQA. Lys-156 serves as a coordination point for xanthine.

The protein belongs to the purine/pyrimidine phosphoribosyltransferase family. Xpt subfamily. Homodimer.

The protein resides in the cytoplasm. It catalyses the reaction XMP + diphosphate = xanthine + 5-phospho-alpha-D-ribose 1-diphosphate. It participates in purine metabolism; XMP biosynthesis via salvage pathway; XMP from xanthine: step 1/1. Converts the preformed base xanthine, a product of nucleic acid breakdown, to xanthosine 5'-monophosphate (XMP), so it can be reused for RNA or DNA synthesis. The polypeptide is Xanthine phosphoribosyltransferase (Lacticaseibacillus casei (strain BL23) (Lactobacillus casei)).